A 483-amino-acid polypeptide reads, in one-letter code: UDP-N-acetylmuramoyl-L-alanyl-D-glutamate--2,6-diaminopimelate ligase (483 aa).

UDP-N-acetyl-alpha-D-muramoyl-L-alanyl-D-glutamate is bound at residue Ser30. ATP is bound at residue 109-115 (GTNGKTT). UDP-N-acetyl-alpha-D-muramoyl-L-alanyl-D-glutamate is bound by residues 151-152 (TT), Ser178, and Arg186. Lys218 bears the N6-carboxylysine mark. Meso-2,6-diaminopimelate contacts are provided by residues Arg380, 403–406 (DNPR), Gly453, and Glu457. The short motif at 403–406 (DNPR) is the Meso-diaminopimelate recognition motif element.

It belongs to the MurCDEF family. MurE subfamily. It depends on Mg(2+) as a cofactor. Post-translationally, carboxylation is probably crucial for Mg(2+) binding and, consequently, for the gamma-phosphate positioning of ATP.

Its subcellular location is the cytoplasm. It catalyses the reaction UDP-N-acetyl-alpha-D-muramoyl-L-alanyl-D-glutamate + meso-2,6-diaminopimelate + ATP = UDP-N-acetyl-alpha-D-muramoyl-L-alanyl-gamma-D-glutamyl-meso-2,6-diaminopimelate + ADP + phosphate + H(+). It functions in the pathway cell wall biogenesis; peptidoglycan biosynthesis. Functionally, catalyzes the addition of meso-diaminopimelic acid to the nucleotide precursor UDP-N-acetylmuramoyl-L-alanyl-D-glutamate (UMAG) in the biosynthesis of bacterial cell-wall peptidoglycan. In Chlamydia pneumoniae (Chlamydophila pneumoniae), this protein is UDP-N-acetylmuramoyl-L-alanyl-D-glutamate--2,6-diaminopimelate ligase.